Here is a 3848-residue protein sequence, read N- to C-terminus: MVSHIAASVLTKYLGDYVDDLNKDNIKLSFLSGEAVLQDLKIKKTVLQSFLPNVIVKQAIIKKLSLHVPWKDLKGKPAIIKIEGIYVLAETSVEFDEQYYKKKFQDEKQAKLHIQEVLRLNKQQLKNPHQSTTTTTTTSDESNTFGSKLLQTVVDNLQLYIDSVHIRFEDSVNRRSFSFGVTLNSLVAESTDQTWNPTFIKNESTIIHKLINLNQLSIYWNSNSPKLKYTNIDDLSQKLKSMIKKEDSGKQQQQQQQQQGEEQDDEIEEDYFLSTESRKQQYIIDPISAKLKVVINKSIIPSEVIPKYNLNFEFDKTDISLSDYQYKDITGILESFKLFEKSIEFRSARPINTTIKQSPRKWWNYAIQCVLQKVHQKRYTQSWSYIKEFLSDKRDYIELFKKLKKKTIHQTEQTRLDSLEWKLPFDQILFFRNLSFKIIEKEEKLEKERLKLQQQQQQQQQNLNKISPTTTTTPSTSTGGGGWLSSWWKPIVNTSVPITAATTTTTATNTDSTITKLKDIKLSKDDWNEIYDTIGYDENDDIINSNVASLQQPKQFGKDFSNIIKTVINFRLVQGGLKLKKKRRTIALLQLNDISLSLKSKINSSFVFNGNLKGLELIDQSTFNTQFPKLISPLLKRNSSSIPTKIISQPPIFNITLESHSLSSTITSSTTTATTTQSTSTNSNNNNNIKVNYSLSIQSKPLTIVYYPKFISTVNDFFFKKEDDQDVQDMVLEDLEKKAQETIESIKAQTRDKLLLAISNKTTFSIDMDLEAPIILVPESITNKNTNLLILDLGKLLINHYPKQQQLQQQLQQLQQEQGQEQEQEQKQEQKQEQEQKDWKEEFYDEYLFKLINTQVLLANLKNDWRDIEQVKKFRMNIANPLNANFTLKISKLNNRQLLTSLKLMASIDLLEFYLSSCQYVNLVNIIQSVTQPIDQQQQLIGSESMYMSAFDYSSVYQSNIFKQPQQLQPQQKQQSPPLISSPPLIKKKKSYSKEFIDSYKMFEASFNIDKFNIHLRLDNYDSSGSSSNNDSSNTTTTNHNQLVSHNVALVYLRCLHGTYVQKLFDTNLELLIKGMWIEDCFQKPQSIAHGSGGDYLATTTNRFKPNDVNIGGGSNENLIKFKIQQISSDSPFYNNIDKLLDIELSQINLILNRKTVAGLIEFSNSVSNLSILKNNQNNNQNNNQNNNQNINESSPTVFITSPPPPPPPPLNHQSNNNSQYDTLSSSTYLIRNSNNKILPPIQQISTTANNNIKIQTKATIKIDLVRILLTRENNNPLIKASFTGFNCTTDQYNYKTIMNGKLGSLKIYDMTTEGRNYRTILTTRERKLNNKTSPTTPSSSGVSTGTTFDIDIDNFDTVSSSSSSSLLSSSSLLISPPGGEQSSLVYFQFESRNDNNSQMLKINLSSIRFIFLKRFTEELRLFLNNVNMMREYLKSSIYSAATVISQNRSTLFYEIEIQNPYIVIPLSSLSNKIFIVDLGKINIKNQFEKIIPTSTGEIDMILMEPVIIENIIIEAQNIKLLSGLNSEIKKSENNNNNNNNSNTNQRSYGTMVSDVNVSINLKTPLFSELNLKQYLEQCMKLQSWEKHFTISQFELNVSEYELKSLIELLDGNLSEFSSEILNDANSSFDQQKQQEIEKLKLQQEIEDNNNDNEDEQVNKLLQLIKEQVGYTYCKLGKFSIMFMKRDGTDIDDRLVLFYVSEAKMDIIKEEMETSMNIEIKSVQMKDFSKETHPHLRNILTPLSLKSVNEKRQQKEQILPQIIIKGSIKPPPIQQSLFQISIDGMFMIFVPHSWIPVQDSIMKLSKFATEAWNRYTIKVYGEAPTNDEIIQSGLSLFSLSIKDIKISIPGDCTVNSGQGENEYSLFIRSSLDIQTTSRGAMGVETITLIDANNIQIYRNQLVDTNNENINNNNNNNLTTSTTTTTTTNKNQSNIKIIAPFKIVFQTTSTLLNSESSLSINNIVVTFSYQDFKLMMKIINSIIESNNQNLIQEKMKRNYLKKYRDPNECTSDDELEEQLQQLENDDYNDDNYNSNGNNNNNNSNNQLPVKEDSQLQKYLSISLEKGEFILNDDHKISSPIKLLSIGVDGLKSNIFSFPQKNQIALSLDANMKAGYFNKNIGIWEPLIENWGFSFTSNNSIEGGWMVNFNSKIPLYINITKIFIDTSISTYQIWADDYYSQQKKDKKNKSNDYDNDEIIEDTVEQVNNDLIKPADDQKNNNNNKNDNNNNNNNNNNNNNNNNNNNNNNNNNNNNNNNNNNNNNNNNNNKNNNDNNNNIKNNNNNENNNNKNLQEKEEIKYPYYIRNDTGVELWYWVRSDEIQKLPVGKEAGFNPKFSSSSSSSQQQQQQPLSPLLQTQQQIQLKPEELQQKIELERKISFQLFGDFQPIAKVPMDSIGTYTLYPMPEYKNIKLLYEISYRNGAKVLSLHSNFNIRNDTDIPVVVHITAIYNQIPRSIEILLNPHVKIPIPVEYTIGRIKYKPYNLGYDYSAERIDCSNVLQLFKSSKQKQKQLNNQLQQQSNNNNNNNNNNNNTNSNNSNLLGNLIGGNNNNNDLNIGKISSKMICKHGVKLPFVFLSSIEKNSLETKNTIEISINTAIMIENVLACDLQYRLYHGKNKKIIGSAFFSGVIPMGKKLPVLVYDSLQDIYMEFQIYDFQWSPLCLIDSMVGLAVTDKVKIEDRLHQPLLISFDNRIQPNGSRFVTLYCEYWLINQTGLPLYFRHHIGAQTIDPAGQTPTKQIETIHESTSMKPTDSRNWYTKEWNHPSQPFMFAYSDNSIVGGKFSLKIYDSNWSSPFSLISSQSSSNSNIEISEDRTDEEKEIKNVIGTITKRQPLKTNYNLSVSILPSNSKFWRTKVVTFSPMYLMVNSTRFRILYQQFDCDSNTQSIIQDQSLPFQFPSSRHEKLIRIGILDTSAISNNPYNANDVSNIKWSGYFNPQILGQVVLRLRNETDNSSGGVLNKFKKDSEISTKKRNSNFISNLLTIKNKQLNVDSSNQQQQQLQQQQQQQQQQQQQQQQQQQQQQQQQQSINQQTSLNSSSSSTITSTNSTVIFEDLRVFINVTIRVKSSKSLTTTMIILNEQNPELPPYRINNKTRFPLWIRQKKTEIWDKVQPKTSIPYAWDHPILPKKLIIEFPTGLTKTYRLGNLEENSIVSIKNPNSSGGYDRVDFQISIIANGPTRVLNIKERDLNGDTNNNTISPQLNSIETFGITNDPNNPNNPNNNPNNNDKLNVKYEFSIDLSNIGISIINKIPTREEIVYLSIDGLKLEVKQSKLDQYIQFKVDDLQIDDQRYSTNFPVFLCQSKKINHSINQQPNQQSSSPQSTNTTTTTTTNTTTTNNTTQQQKLKPFLQFSATRTLKYSNIMFFRYFSILIQEFDINLDEASILNALSFININLNSLNEHFTLHPTITQEEILETKNASNIENHMVYFEMLHINPVKMNLSFISCKSPKETQAILGARSLAELLIGFKSNSPFLNIERAPIKFNGFIWEHPFLSTRQVIDEISLHFSYQMMSQAHKIFGSFDFIGNPIRLAESLGSGFKDFFHEPALGLVKSPQDFAAGLSKGTSSLINNSVFGFADSTSKITGTISKGLVQLSLDDSYIKERQESNKQKPKGVKEGLEFGFRDFGEGVIKGITGIIDEPYKGATQEKSWEGFFKGIGKGVLGVAVKPTVGVFDLVSKTSEGIKNSTTVAKSLSQIKRRRIPRYFPREGTLSTYNQFKSIGSFILYSKIGPPPTHDWYVFHTILNYKDLILIGSNYHLLLIRCANLSINGNLSDSEIIWKVKFSEIIQIKNIPSNFGFQLFVNVNGVGQPPITLLIPTLTEEVRNSVVRKITDLILLEKRFGNNLD.

Residues histidine 4–leucine 112 form the Chorein N-terminal domain. Disordered stretches follow at residues isoleucine 243–glutamate 268, leucine 450–glycine 481, glutamine 966–leucine 985, lysine 1174–serine 1219, glutamate 1326–threonine 1345, glutamate 1907–threonine 1926, aspartate 2024–proline 2047, isoleucine 2209–leucine 2290, phenylalanine 2330–leucine 2353, lysine 2509–glycine 2541, glycine 3209–aspartate 3228, and isoleucine 3310–glutamine 3342. Low complexity-rich tracts occupy residues glutamine 251–glycine 260 and leucine 452–serine 477. Residues asparagine 1175–asparagine 1190 show a composition bias toward low complexity. Positions isoleucine 1191 to isoleucine 1200 are enriched in polar residues. A compositionally biased stretch (pro residues) spans serine 1202–leucine 1211. Over residues threonine 1333–threonine 1345 the composition is skewed to low complexity. Composition is skewed to low complexity over residues aspartate 2029 to asparagine 2044, asparagine 2217 to asparagine 2289, and serine 2335 to leucine 2353. 2 stretches are compositionally biased toward low complexity: residues asparagine 3212–aspartate 3228 and asparagine 3311–glutamine 3342.

The protein belongs to the VPS13 family.

It localises to the membrane. Its function is as follows. Mediates the transfer of lipids between membranes at organelle contact sites. In Dictyostelium discoideum (Social amoeba), this protein is Intermembrane lipid transfer protein tipC (tipC).